Consider the following 283-residue polypeptide: MGNIQYLAAIPSPPQGVWHLGPVPIRAYALCIIVGIFVAMKIGSVRYQQRGGNPDLVIDAGIVAVIAGIIGGRLYHVLTDNQKYFCADCNPVDVFKITNGGLGIWGAVALGTIAVYFYLKKKGVAFALFADAVAPGIILAQAIGRLGNWFNQELYGRETSVPWALEIYYRVDASGKFAPLTGHSTGEVMATVHPTFLYEMIWNLVIFAVLLWADKKFQLGHGRVFALYVAGYTAGRFVVENMRADDATMVFGLRINVIVSVVVCAIAVGALFALRRGRESISS.

4 consecutive transmembrane segments (helical) span residues Leu-20–Met-40, Gly-51–Gly-71, Ile-97–Phe-117, and Gly-123–Ile-143. Position 145 (Arg-145) interacts with a 1,2-diacyl-sn-glycero-3-phospho-(1'-sn-glycerol). Transmembrane regions (helical) follow at residues Val-192–Trp-212 and Ile-255–Arg-275.

This sequence belongs to the Lgt family.

Its subcellular location is the cell membrane. The catalysed reaction is L-cysteinyl-[prolipoprotein] + a 1,2-diacyl-sn-glycero-3-phospho-(1'-sn-glycerol) = an S-1,2-diacyl-sn-glyceryl-L-cysteinyl-[prolipoprotein] + sn-glycerol 1-phosphate + H(+). It participates in protein modification; lipoprotein biosynthesis (diacylglyceryl transfer). Functionally, catalyzes the transfer of the diacylglyceryl group from phosphatidylglycerol to the sulfhydryl group of the N-terminal cysteine of a prolipoprotein, the first step in the formation of mature lipoproteins. This Corynebacterium diphtheriae (strain ATCC 700971 / NCTC 13129 / Biotype gravis) protein is Phosphatidylglycerol--prolipoprotein diacylglyceryl transferase.